A 141-amino-acid polypeptide reads, in one-letter code: Large ribosomal subunit protein uL11 (141 aa).

It belongs to the universal ribosomal protein uL11 family. Part of the ribosomal stalk of the 50S ribosomal subunit. Interacts with L10 and the large rRNA to form the base of the stalk. L10 forms an elongated spine to which L12 dimers bind in a sequential fashion forming a multimeric L10(L12)X complex. In terms of processing, one or more lysine residues are methylated.

Forms part of the ribosomal stalk which helps the ribosome interact with GTP-bound translation factors. This chain is Large ribosomal subunit protein uL11, found in Thermotoga neapolitana (strain ATCC 49049 / DSM 4359 / NBRC 107923 / NS-E).